The sequence spans 92 residues: YcgL domain-containing protein Sfri_1738 (92 aa).

A YcgL domain is found at 1-85; that stretch reads MICAVYKSGR…PQINLLEQHK (85 aa).

The polypeptide is YcgL domain-containing protein Sfri_1738 (Shewanella frigidimarina (strain NCIMB 400)).